A 663-amino-acid polypeptide reads, in one-letter code: UvrABC system protein B (663 aa).

Positions 1–10 (MIDKRDDKPF) are enriched in basic and acidic residues. Residues 1 to 23 (MIDKRDDKPFKLKSKYKPSGDQP) form a disordered region. The Helicase ATP-binding domain maps to 31-418 (DNIEGGEKAQ…TNTIIEQIIR (388 aa)). 44–51 (GATGTGKT) serves as a coordination point for ATP. Residues 97–120 (YYDYYQPEAYVPSSDTYIEKDSSV) carry the Beta-hairpin motif. The region spanning 435-597 (QMDDLLGEIN…IVPQTIKKDI (163 aa)) is the Helicase C-terminal domain. The 36-residue stretch at 627-662 (KEAINALQKQMQEAAELLDFELAAQMRDLILELKLM) folds into the UVR domain.

The protein belongs to the UvrB family. Forms a heterotetramer with UvrA during the search for lesions. Interacts with UvrC in an incision complex.

The protein localises to the cytoplasm. Its function is as follows. The UvrABC repair system catalyzes the recognition and processing of DNA lesions. A damage recognition complex composed of 2 UvrA and 2 UvrB subunits scans DNA for abnormalities. Upon binding of the UvrA(2)B(2) complex to a putative damaged site, the DNA wraps around one UvrB monomer. DNA wrap is dependent on ATP binding by UvrB and probably causes local melting of the DNA helix, facilitating insertion of UvrB beta-hairpin between the DNA strands. Then UvrB probes one DNA strand for the presence of a lesion. If a lesion is found the UvrA subunits dissociate and the UvrB-DNA preincision complex is formed. This complex is subsequently bound by UvrC and the second UvrB is released. If no lesion is found, the DNA wraps around the other UvrB subunit that will check the other stand for damage. This chain is UvrABC system protein B, found in Streptococcus pyogenes serotype M18 (strain MGAS8232).